Consider the following 345-residue polypeptide: L-threonine 3-dehydrogenase (345 aa).

Cys39 serves as a coordination point for Zn(2+). Active-site charge relay system residues include Thr41 and His44. His64, Glu65, Cys94, Cys97, Cys100, and Cys108 together coordinate Zn(2+). Residues Ile176, Asp196, Arg201, 263 to 265, and 287 to 288 each bind NAD(+); these read LGI and VY.

Belongs to the zinc-containing alcohol dehydrogenase family. Homotetramer. The cofactor is Zn(2+).

Its subcellular location is the cytoplasm. It carries out the reaction L-threonine + NAD(+) = (2S)-2-amino-3-oxobutanoate + NADH + H(+). It functions in the pathway amino-acid degradation; L-threonine degradation via oxydo-reductase pathway; glycine from L-threonine: step 1/2. Functionally, catalyzes the NAD(+)-dependent oxidation of L-threonine to 2-amino-3-ketobutyrate. This Anaeromyxobacter sp. (strain K) protein is L-threonine 3-dehydrogenase.